A 302-amino-acid polypeptide reads, in one-letter code: Ribostamycin:4-(gamma-L-glutamylamino)-(S)-2-hydroxybutanoyl-[BtrI acyl-carrier protein] 4-(gamma-L-glutamylamino)-(S)-2-hydroxybutanoate transferase (302 aa).

The catalysed reaction is 4-(gamma-L-glutamylamino)-(2S)-2-hydroxybutanoyl-[BtrI ACP] + ribostamycin = gamma-L-glutamyl-butirosin B + holo-[BtrI ACP] + H(+). The protein operates within antibiotic biosynthesis; butirosin biosynthesis. Its function is as follows. Aminoglycoside acyltransferase that attaches the (S)-4-amino-2-hydroxybutyrate (AHBA) side chain from the acyl carrier protein BtrI to the aminoglycoside ribostamycin in the biosynthetic pathway of butirosin. The AHBA side chain protects the antibiotic from several common resistance mechanisms. This Niallia circulans (Bacillus circulans) protein is Ribostamycin:4-(gamma-L-glutamylamino)-(S)-2-hydroxybutanoyl-[BtrI acyl-carrier protein] 4-(gamma-L-glutamylamino)-(S)-2-hydroxybutanoate transferase (btrH).